We begin with the raw amino-acid sequence, 295 residues long: N-acetylmuramic acid 6-phosphate etherase (295 aa).

In terms of domain architecture, SIS spans 53–216; sequence AIQRFNNGGR…STMTMIGVGK (164 aa). Glu-81 acts as the Proton donor in catalysis. Residue Glu-112 is part of the active site.

The protein belongs to the GCKR-like family. MurNAc-6-P etherase subfamily. In terms of assembly, homodimer.

The catalysed reaction is N-acetyl-D-muramate 6-phosphate + H2O = N-acetyl-D-glucosamine 6-phosphate + (R)-lactate. It functions in the pathway amino-sugar metabolism; N-acetylmuramate degradation. In terms of biological role, specifically catalyzes the cleavage of the D-lactyl ether substituent of MurNAc 6-phosphate, producing GlcNAc 6-phosphate and D-lactate. In Staphylococcus epidermidis (strain ATCC 35984 / DSM 28319 / BCRC 17069 / CCUG 31568 / BM 3577 / RP62A), this protein is N-acetylmuramic acid 6-phosphate etherase.